The sequence spans 429 residues: Glucose-1-phosphate adenylyltransferase (429 aa).

Residues Gly-162, 177–178 (EK), and Ser-209 contribute to the alpha-D-glucose 1-phosphate site.

The protein belongs to the bacterial/plant glucose-1-phosphate adenylyltransferase family. Homotetramer.

It carries out the reaction alpha-D-glucose 1-phosphate + ATP + H(+) = ADP-alpha-D-glucose + diphosphate. Its pathway is glycan biosynthesis; glycogen biosynthesis. In terms of biological role, involved in the biosynthesis of ADP-glucose, a building block required for the elongation reactions to produce glycogen. Catalyzes the reaction between ATP and alpha-D-glucose 1-phosphate (G1P) to produce pyrophosphate and ADP-Glc. The protein is Glucose-1-phosphate adenylyltransferase of Gloeothece citriformis (strain PCC 7424) (Cyanothece sp. (strain PCC 7424)).